A 156-amino-acid polypeptide reads, in one-letter code: Small ribosomal subunit protein uS7 (156 aa).

It belongs to the universal ribosomal protein uS7 family. Part of the 30S ribosomal subunit. Contacts proteins S9 and S11.

Its function is as follows. One of the primary rRNA binding proteins, it binds directly to 16S rRNA where it nucleates assembly of the head domain of the 30S subunit. Is located at the subunit interface close to the decoding center, probably blocks exit of the E-site tRNA. The protein is Small ribosomal subunit protein uS7 of Corynebacterium jeikeium (strain K411).